We begin with the raw amino-acid sequence, 272 residues long: Dihydropteroate synthase (272 aa).

The Pterin-binding domain occupies Met1–Gln256. Asn11 is a binding site for Mg(2+). (7,8-dihydropterin-6-yl)methyl diphosphate is bound by residues Thr51, Asp89, Asn108, Asp172, Lys208, and Arg244–His246.

This sequence belongs to the DHPS family. Homodimer. Requires Mg(2+) as cofactor.

The catalysed reaction is (7,8-dihydropterin-6-yl)methyl diphosphate + 4-aminobenzoate = 7,8-dihydropteroate + diphosphate. It participates in cofactor biosynthesis; tetrahydrofolate biosynthesis; 7,8-dihydrofolate from 2-amino-4-hydroxy-6-hydroxymethyl-7,8-dihydropteridine diphosphate and 4-aminobenzoate: step 1/2. In terms of biological role, catalyzes the condensation of para-aminobenzoate (pABA) with 6-hydroxymethyl-7,8-dihydropterin diphosphate (DHPt-PP) to form 7,8-dihydropteroate (H2Pte), the immediate precursor of folate derivatives. The chain is Dihydropteroate synthase (folP) from Staphylococcus epidermidis (strain ATCC 12228 / FDA PCI 1200).